The chain runs to 941 residues: Isoleucine--tRNA ligase (941 aa).

A 'HIGH' region motif is present at residues 69-79 (PYANGDIHIGH). Glu589 is an L-isoleucyl-5'-AMP binding site. Residues 630–634 (KMSKS) carry the 'KMSKS' region motif. ATP is bound at residue Lys633. Positions 915, 918, 932, and 935 each coordinate Zn(2+).

It belongs to the class-I aminoacyl-tRNA synthetase family. IleS type 1 subfamily. In terms of assembly, monomer. Zn(2+) serves as cofactor.

Its subcellular location is the cytoplasm. It catalyses the reaction tRNA(Ile) + L-isoleucine + ATP = L-isoleucyl-tRNA(Ile) + AMP + diphosphate. Catalyzes the attachment of isoleucine to tRNA(Ile). As IleRS can inadvertently accommodate and process structurally similar amino acids such as valine, to avoid such errors it has two additional distinct tRNA(Ile)-dependent editing activities. One activity is designated as 'pretransfer' editing and involves the hydrolysis of activated Val-AMP. The other activity is designated 'posttransfer' editing and involves deacylation of mischarged Val-tRNA(Ile). In Zymomonas mobilis subsp. mobilis (strain ATCC 31821 / ZM4 / CP4), this protein is Isoleucine--tRNA ligase.